A 616-amino-acid polypeptide reads, in one-letter code: MAPIDPHSFTDSSHPLTTHVALSLYLDFNTSIIHGSALLTLSSAFSGELSLDTRCISIAMVLDPLTLEPIPYSVSTTPDRIRGTEVVVVLSGQSSLLIVYSTSPSASALQWLSPLQTFSKLHPYVYTQCQAIHARSIFPCQDTPAARIRYDVVMNIPNSLSAVMSARHVRRRLAVPEEAKHLEAGSLGSSLWCGEDRVVEEFAMEQPIPPYLFAFAVGELGFREVGPRTRVYTESAAIEVLDAAALEFAGTEDMIKQGEKLFGDYEWERFDLLVLPPSFPYGGMENPRMVFLTPTVIKGDATGAQVVAHELAHSWTGNLITNINNEHFWLNEGFTTYAERRIVEVVQGADIATLNIGIGWRGLTDEMERFKDNLECTKLWNKQEGVDPDDVYSQVPYEKGFQFVLRIERQIGRTAFDEFLKKYIATFKFKSIDTNTFLEFLKANIPGIEKEINLQLWTEGVGIPEDAYEPVSTIYTKIISLAKEFKEGKMPSEDDVAEWNGQEWELYLENLPKSCEPSQVMALDKRYRLAESKDYEVKVSFLQLAVTSKCREYHGEVKKTLKEVGRMKYLRPLFTALAQSGGTEEKQLAKQVFAEARETYHPIAQGVVESILSKYI.

Substrate-binding positions include glutamine 128–glutamine 130 and glycine 282–asparagine 286. Residue histidine 309 coordinates Zn(2+). Glutamate 310 acts as the Proton acceptor in catalysis. Residues histidine 313 and glutamate 332 each contribute to the Zn(2+) site. Tyrosine 397 acts as the Proton donor in catalysis. Substrate is bound at residue arginine 566–lysine 568.

It belongs to the peptidase M1 family. It depends on Zn(2+) as a cofactor.

The protein resides in the cytoplasm. It carries out the reaction an epoxide + H2O = an ethanediol. In terms of biological role, aminopeptidase that preferentially cleaves di- and tripeptides. Also has low epoxide hydrolase activity (in vitro). Can hydrolyze the epoxide leukotriene LTA(4) but it forms preferentially 5,6-dihydroxy-7,9,11,14-eicosatetraenoic acid rather than the cytokine leukotriene B(4) as the product compared to the homologous mammalian enzyme (in vitro). The sequence is that of Leucine aminopeptidase (LKHA4) from Arabidopsis thaliana (Mouse-ear cress).